A 378-amino-acid chain; its full sequence is Histidinol-phosphate aminotransferase (378 aa).

Residues 1–20 (MSVSAKETQRHPARPEPRPG) are disordered. The span at 7–17 (ETQRHPARPEP) shows a compositional bias: basic and acidic residues. K232 is modified (N6-(pyridoxal phosphate)lysine).

This sequence belongs to the class-II pyridoxal-phosphate-dependent aminotransferase family. Histidinol-phosphate aminotransferase subfamily. In terms of assembly, homodimer. Pyridoxal 5'-phosphate serves as cofactor.

The enzyme catalyses L-histidinol phosphate + 2-oxoglutarate = 3-(imidazol-4-yl)-2-oxopropyl phosphate + L-glutamate. The protein operates within amino-acid biosynthesis; L-histidine biosynthesis; L-histidine from 5-phospho-alpha-D-ribose 1-diphosphate: step 7/9. The sequence is that of Histidinol-phosphate aminotransferase from Azorhizobium caulinodans (strain ATCC 43989 / DSM 5975 / JCM 20966 / LMG 6465 / NBRC 14845 / NCIMB 13405 / ORS 571).